The primary structure comprises 434 residues: Glutamate-1-semialdehyde 2,1-aminomutase 1 (434 aa).

Lys270 is modified (N6-(pyridoxal phosphate)lysine).

This sequence belongs to the class-III pyridoxal-phosphate-dependent aminotransferase family. HemL subfamily. Homodimer. Pyridoxal 5'-phosphate is required as a cofactor.

It is found in the cytoplasm. It carries out the reaction (S)-4-amino-5-oxopentanoate = 5-aminolevulinate. It participates in porphyrin-containing compound metabolism; protoporphyrin-IX biosynthesis; 5-aminolevulinate from L-glutamyl-tRNA(Glu): step 2/2. This chain is Glutamate-1-semialdehyde 2,1-aminomutase 1, found in Bacillus thuringiensis (strain Al Hakam).